The chain runs to 87 residues: Phosphoribosyl-ATP pyrophosphatase (87 aa).

It belongs to the PRA-PH family.

Its subcellular location is the cytoplasm. It carries out the reaction 1-(5-phospho-beta-D-ribosyl)-ATP + H2O = 1-(5-phospho-beta-D-ribosyl)-5'-AMP + diphosphate + H(+). The protein operates within amino-acid biosynthesis; L-histidine biosynthesis; L-histidine from 5-phospho-alpha-D-ribose 1-diphosphate: step 2/9. In Beutenbergia cavernae (strain ATCC BAA-8 / DSM 12333 / CCUG 43141 / JCM 11478 / NBRC 16432 / NCIMB 13614 / HKI 0122), this protein is Phosphoribosyl-ATP pyrophosphatase.